A 177-amino-acid chain; its full sequence is Alpha-crystallin B chain (177 aa).

Position 1 is an N-acetylmethionine (Met1). A sHSP domain is found at 58-166 (RMPSWAQTGL…PERSVPISRD (109 aa)). Residues His85, His106, Glu108, His113, and His121 each coordinate Zn(2+). The span at 155–169 (DVPERSVPISRDEKP) shows a compositional bias: basic and acidic residues. Positions 155 to 177 (DVPERSVPISRDEKPAVAGPQQK) are disordered.

It belongs to the small heat shock protein (HSP20) family. In terms of assembly, heteromer composed of three CRYAA and one CRYAB subunits. Aggregates with homologous proteins, including the small heat shock protein HSPB1, to form large heteromeric complexes. Inter-subunit bridging via zinc ions enhances stability, which is crucial as there is no protein turn over in the lens. Interacts with HSPBAP1 and TTN/titin.

May contribute to the transparency and refractive index of the lens. The protein is Alpha-crystallin B chain (CRYAB) of Squalus acanthias (Spiny dogfish).